The primary structure comprises 123 residues: Late histone H2B.L1 (123 aa).

Residues 1–10 (MPAKAQPAGK) show a composition bias toward low complexity. The disordered stretch occupies residues 1 to 33 (MPAKAQPAGKKGSKKAKAPRPSGGKKRRRRRKE). Over residues 11–32 (KGSKKAKAPRPSGGKKRRRRRK) the composition is skewed to basic residues. Serine 110 carries O-linked (GlcNAc) serine glycosylation. Lysine 118 is covalently cross-linked (Glycyl lysine isopeptide (Lys-Gly) (interchain with G-Cter in ubiquitin)).

It belongs to the histone H2B family. In terms of assembly, the nucleosome is a histone octamer containing two molecules each of H2A, H2B, H3 and H4 assembled in one H3-H4 heterotetramer and two H2A-H2B heterodimers. The octamer wraps approximately 147 bp of DNA. In terms of processing, monoubiquitination of Lys-118 gives a specific tag for epigenetic transcriptional activation and is also prerequisite for histone H3 'Lys-4' and 'Lys-79' methylation. Post-translationally, glcNAcylation at Ser-110 promotes monoubiquitination of Lys-118. It fluctuates in response to extracellular glucose, and associates with transcribed genes.

It localises to the nucleus. Its subcellular location is the chromosome. Its function is as follows. Core component of nucleosome. Nucleosomes wrap and compact DNA into chromatin, limiting DNA accessibility to the cellular machineries which require DNA as a template. Histones thereby play a central role in transcription regulation, DNA repair, DNA replication and chromosomal stability. DNA accessibility is regulated via a complex set of post-translational modifications of histones, also called histone code, and nucleosome remodeling. The chain is Late histone H2B.L1 from Strongylocentrotus purpuratus (Purple sea urchin).